The primary structure comprises 162 residues: Cytochrome c-type biogenesis protein CcmE (162 aa).

The Cytoplasmic portion of the chain corresponds to 1–8 (MNPVRKKR). The chain crosses the membrane as a helical; Signal-anchor for type II membrane protein span at residues 9-29 (LIIVLAIVVGVGAAVGLALSA). Residues 30–162 (LQQNINLFYT…GETSYNQEGK (133 aa)) are Periplasmic-facing. Histidine 124 and tyrosine 128 together coordinate heme. Residues 139–148 (DSGQLKHYEN) are compositionally biased toward basic and acidic residues. The interval 139–162 (DSGQLKHYENGKAAGETSYNQEGK) is disordered.

Belongs to the CcmE/CycJ family.

The protein localises to the cell inner membrane. Its function is as follows. Heme chaperone required for the biogenesis of c-type cytochromes. Transiently binds heme delivered by CcmC and transfers the heme to apo-cytochromes in a process facilitated by CcmF and CcmH. The sequence is that of Cytochrome c-type biogenesis protein CcmE from Pseudomonas aeruginosa (strain LESB58).